The sequence spans 154 residues: Lipoprotein signal peptidase (154 aa).

The next 3 membrane-spanning stretches (helical) occupy residues 7–27, 58–78, and 88–108; these read VLYL…KNYI, IFSG…AVVV, and NWLF…NFID. Residues aspartate 117 and aspartate 133 contribute to the active site. A helical transmembrane segment spans residues 128–148; the sequence is IFNIADSAITVGIVLVFIYLI.

It belongs to the peptidase A8 family.

It localises to the cell membrane. It carries out the reaction Release of signal peptides from bacterial membrane prolipoproteins. Hydrolyzes -Xaa-Yaa-Zaa-|-(S,diacylglyceryl)Cys-, in which Xaa is hydrophobic (preferably Leu), and Yaa (Ala or Ser) and Zaa (Gly or Ala) have small, neutral side chains.. It participates in protein modification; lipoprotein biosynthesis (signal peptide cleavage). Its function is as follows. This protein specifically catalyzes the removal of signal peptides from prolipoproteins. The polypeptide is Lipoprotein signal peptidase (Lactobacillus gasseri (strain ATCC 33323 / DSM 20243 / BCRC 14619 / CIP 102991 / JCM 1131 / KCTC 3163 / NCIMB 11718 / NCTC 13722 / AM63)).